The following is a 54-amino-acid chain: Ovomucoid (54 aa).

Residues 4 to 54 form the Kazal-like domain; that stretch reads VDCSEYPKPACTLEYRPLCGSDSKTYGNKCNFCNAVVESNGTLTLSHFGKC. Intrachain disulfides connect Cys-6-Cys-36, Cys-14-Cys-33, and Cys-22-Cys-54. The N-linked (GlcNAc...) asparagine glycan is linked to Asn-43.

It localises to the secreted. The chain is Ovomucoid from Alectoris chukar (Chukar partridge).